We begin with the raw amino-acid sequence, 332 residues long: Ferrochelatase (332 aa).

2 residues coordinate Fe cation: histidine 201 and glutamate 283.

The protein belongs to the ferrochelatase family.

It is found in the cytoplasm. The enzyme catalyses heme b + 2 H(+) = protoporphyrin IX + Fe(2+). Its pathway is porphyrin-containing compound metabolism; protoheme biosynthesis; protoheme from protoporphyrin-IX: step 1/1. In terms of biological role, catalyzes the ferrous insertion into protoporphyrin IX. This is Ferrochelatase from Francisella tularensis subsp. holarctica (strain FTNF002-00 / FTA).